The sequence spans 400 residues: EARP-interacting protein homolog (400 aa).

A disordered region spans residues 95–114 (NNNSNNTNNNDNTNNNTNNN). Residues 96 to 114 (NNSNNTNNNDNTNNNTNNN) show a composition bias toward low complexity. WD repeat units follow at residues 138–178 (GHTG…NEPT), 227–267 (AHSE…DPVK), and 271–311 (GHNH…SAFN). Low complexity predominate over residues 314-333 (NNISNSNEQQHSQQPNEQQP). Residues 314 to 348 (NNISNSNEQQHSQQPNEQQPQQPPQPVKQKKNKRN) are disordered. One copy of the WD 4 repeat lies at 358 to 397 (EHEDSVYNISWSSSNFLFASLSYDGRFVVNNVPKEYSDIL).

The protein belongs to the WD repeat EIPR1 family.

The chain is EARP-interacting protein homolog from Dictyostelium discoideum (Social amoeba).